A 64-amino-acid polypeptide reads, in one-letter code: Toxin BmCa-1 (64 aa).

A signal peptide spans 1–18; that stretch reads MNTFVVVFLLLTAILCHA. Residues 19-27 constitute a propeptide that is removed on maturation; the sequence is EHALDETAR. 3 disulfide bridges follow: cysteine 29/cysteine 43, cysteine 36/cysteine 49, and cysteine 42/cysteine 58.

It belongs to the scorpion calcin-like family. As to expression, expressed by the venom gland.

It is found in the secreted. In terms of biological role, may increase intracellular calcium release through the activation of nuclear inositol 1,4,5-trisphosphate receptors (ITPR) of cardiomyocytes, thereby causing an increase in the contraction frequency of these cells. The sequence is that of Toxin BmCa-1 from Olivierus martensii (Manchurian scorpion).